The sequence spans 177 residues: UBA-like domain-containing protein 1 (177 aa).

The tract at residues 89–177 (ESFHSGGSGS…RAHPAMEAER (89 aa)) is disordered. The segment covering 112 to 138 (PHAATSSSAASSWPTAASPPGGPQHHQ) has biased composition (low complexity). Residues 139-151 (PQPPLWTPTPPSP) show a composition bias toward pro residues. Positions 167-177 (PRAHPAMEAER) are enriched in basic and acidic residues.

It belongs to the UBALD family.

In Homo sapiens (Human), this protein is UBA-like domain-containing protein 1 (UBALD1).